The sequence spans 559 residues: AP-4 complex accessory subunit tepsin (559 aa).

The ENTH domain occupies 2 to 135 (LDRLAFLQQL…FSESIPSPSH (134 aa)). Disordered stretches follow at residues 131 to 157 (PSPS…APAL), 214 to 290 (AIPS…ESLD), and 472 to 491 (PNGA…SDPA). Composition is skewed to low complexity over residues 144-154 (QSGMGSQASSA) and 266-281 (SRSS…DGQS). Positions 472-485 (PNGAANQKNPNGST) are enriched in polar residues.

It is found in the golgi apparatus. The protein localises to the trans-Golgi network membrane. The protein resides in the cytoplasmic vesicle. Its subcellular location is the cytoplasm. It localises to the cytosol. In terms of biological role, may play a role in vesicular trafficking of proteins at the trans-Golgi network. This Xenopus laevis (African clawed frog) protein is AP-4 complex accessory subunit tepsin.